A 98-amino-acid polypeptide reads, in one-letter code: Cystatin-A (98 aa).

The residue at position 1 (M1) is an N-acetylmethionine. The Secondary area of contact signature appears at 46-50; sequence QVVAG.

The protein belongs to the cystatin family.

The protein localises to the cytoplasm. In terms of biological role, this is an intracellular thiol proteinase inhibitor. The polypeptide is Cystatin-A (CSTA) (Felis catus (Cat)).